Reading from the N-terminus, the 407-residue chain is Argininosuccinate synthase (407 aa).

Residues 10 to 18 and A37 each bind ATP; that span reads AYSGGLDTS. L-citrulline is bound by residues Y88 and S93. ATP is bound at residue G118. Residues T120, N124, and D125 each contribute to the L-aspartate site. N124 contacts L-citrulline. Residues R128, S180, S189, E265, and Y277 each contribute to the L-citrulline site.

The protein belongs to the argininosuccinate synthase family. Type 1 subfamily. Homotetramer.

Its subcellular location is the cytoplasm. The enzyme catalyses L-citrulline + L-aspartate + ATP = 2-(N(omega)-L-arginino)succinate + AMP + diphosphate + H(+). Its pathway is amino-acid biosynthesis; L-arginine biosynthesis; L-arginine from L-ornithine and carbamoyl phosphate: step 2/3. The sequence is that of Argininosuccinate synthase from Alcanivorax borkumensis (strain ATCC 700651 / DSM 11573 / NCIMB 13689 / SK2).